Consider the following 194-residue polypeptide: Inosine triphosphate pyrophosphatase (194 aa).

Residue threonine 10 to lysine 15 participates in ITP binding. Glutamate 36 contributes to the Mg(2+) binding site. ITP-binding positions include lysine 48, aspartate 66–threonine 67, lysine 83, lysine 166, and histidine 171–arginine 172.

This sequence belongs to the HAM1 NTPase family. As to quaternary structure, homodimer. Mg(2+) is required as a cofactor. Requires Mn(2+) as cofactor.

Its subcellular location is the cytoplasm. It is found in the nucleus. It catalyses the reaction ITP + H2O = IMP + diphosphate + H(+). The enzyme catalyses dITP + H2O = dIMP + diphosphate + H(+). The catalysed reaction is XTP + H2O = XMP + diphosphate + H(+). Its function is as follows. Pyrophosphatase that hydrolyzes non-canonical purine nucleotides such as inosine triphosphate (ITP), deoxyinosine triphosphate (dITP) or xanthosine 5'-triphosphate (XTP) to their respective monophosphate derivatives. The enzyme does not distinguish between the deoxy- and ribose forms. Probably excludes non-canonical purines from RNA and DNA precursor pools, thus preventing their incorporation into RNA and DNA and avoiding chromosomal lesions. The sequence is that of Inosine triphosphate pyrophosphatase from Encephalitozoon intestinalis (strain ATCC 50506) (Microsporidian parasite).